A 434-amino-acid polypeptide reads, in one-letter code: Glutamyl-tRNA reductase (434 aa).

Substrate contacts are provided by residues 49–52 (TCNR), serine 109, 114–116 (EPQ), and glutamine 120. The Nucleophile role is filled by cysteine 50. 189–194 (GAGEMC) is an NADP(+) binding site.

It belongs to the glutamyl-tRNA reductase family. As to quaternary structure, homodimer.

The catalysed reaction is (S)-4-amino-5-oxopentanoate + tRNA(Glu) + NADP(+) = L-glutamyl-tRNA(Glu) + NADPH + H(+). It functions in the pathway porphyrin-containing compound metabolism; protoporphyrin-IX biosynthesis; 5-aminolevulinate from L-glutamyl-tRNA(Glu): step 1/2. Catalyzes the NADPH-dependent reduction of glutamyl-tRNA(Glu) to glutamate 1-semialdehyde (GSA). This Geotalea uraniireducens (strain Rf4) (Geobacter uraniireducens) protein is Glutamyl-tRNA reductase.